The following is a 306-amino-acid chain: Mitochondrial substrate carrier family protein ucpA (306 aa).

The Mitochondrial intermembrane portion of the chain corresponds to 1-15 (MSVNLNNNKNNKNKV). Solcar repeat units follow at residues 13-103 (NKVA…ISNA), 112-204 (YFFL…CKNL), and 211-301 (DGIY…FKKL). Residues 16–36 (AIGFISGSLASICATTVTNPI) traverse the membrane as a helical segment. Over 37-83 (ELVKTRLQLQGELQLSQRIYNGVWDAFKQIYKTEGIRGLQSGLIPAY) the chain is Mitochondrial matrix. A helical membrane pass occupies residues 84 to 103 (FSQATMQGIRLGSFDLISNA). Over 104-117 (LGAKPNQDYFFLKN) the chain is Mitochondrial intermembrane. A helical membrane pass occupies residues 118–138 (LLAGATAGAIGAAAGSPFDLV). Over 139 to 174 (KVRMQAANMYKNDPQFVGYSSSFAAFKQIIQKEGFK) the chain is Mitochondrial matrix. Residues 175-195 (GLTRGMLTSAQRTAVGSAIQL) form a helical membrane-spanning segment. At 196–211 (STYGSCKNLVLNFVDD) the chain is on the mitochondrial intermembrane side. A helical transmembrane segment spans residues 212–232 (GIYAYIISSMVAGFIVTFGMN). Topologically, residues 233–276 (PFDVARTRLYFQGKGNSHGEIYKGLMDCVYKTVKKEGFGAVYKG) are mitochondrial matrix. The chain crosses the membrane as a helical span at residues 277-295 (FWAHYLRLGPHTILTLVFW). Residues 296–306 (EQFKKLFSGEL) lie on the Mitochondrial intermembrane side of the membrane.

It belongs to the mitochondrial carrier (TC 2.A.29) family.

The protein resides in the mitochondrion inner membrane. Functionally, mitochondrial solute carriers shuttle metabolites, nucleotides, and cofactors through the mitochondrial inner membrane. Transports oxaloacetate and sulfate. The sequence is that of Mitochondrial substrate carrier family protein ucpA (ucpA) from Dictyostelium discoideum (Social amoeba).